The following is a 52-amino-acid chain: Alpha-crystallin B chain (52 aa).

It belongs to the small heat shock protein (HSP20) family. As to quaternary structure, homodimer. Aggregates with homologous proteins, including alpha-A-crystallin and the small heat shock protein HSPB1, to form large heteromeric complexes.

Functionally, may contribute to the transparency and refractive index of the lens. This chain is Alpha-crystallin B chain (CRYAB), found in Trachemys scripta elegans (Red-eared slider turtle).